Consider the following 141-residue polypeptide: MAVQRTFSIIKPDAVAKNVIGKITTRFEEAGLKIVASKIKQLSKAEAEGFYAEHSERGFFGDLVAFMTSGPVVVQVLEGENAIALNRELMGATNPKEAAAGTIRADFAESIDANAVHGSDSEAAAAREIAYFFAATEVTTR.

Residues lysine 11, phenylalanine 59, arginine 87, threonine 93, arginine 104, and asparagine 114 each coordinate ATP. Catalysis depends on histidine 117, which acts as the Pros-phosphohistidine intermediate.

The protein belongs to the NDK family. Homotetramer. It depends on Mg(2+) as a cofactor.

It is found in the cytoplasm. The catalysed reaction is a 2'-deoxyribonucleoside 5'-diphosphate + ATP = a 2'-deoxyribonucleoside 5'-triphosphate + ADP. It catalyses the reaction a ribonucleoside 5'-diphosphate + ATP = a ribonucleoside 5'-triphosphate + ADP. Major role in the synthesis of nucleoside triphosphates other than ATP. The ATP gamma phosphate is transferred to the NDP beta phosphate via a ping-pong mechanism, using a phosphorylated active-site intermediate. This chain is Nucleoside diphosphate kinase, found in Pseudomonas putida (strain W619).